The chain runs to 512 residues: UDP-N-acetylglucosamine--peptide N-acetylglucosaminyltransferase GtfA subunit (512 aa).

Glycine 16–tyrosine 19 contacts UDP. Histidine 251 is an N-acetyl-D-glucosamine binding site. UDP is bound by residues glutamine 393–histidine 394 and glutamate 413–glycine 416.

Belongs to the glycosyltransferase group 1 family. Glycosyltransferase 4 subfamily. Forms a heterotetramer with 2 subunits each of GtfA and GtfB. Part of the accessory SecA2/SecY2 protein translocation apparatus.

It localises to the cytoplasm. The protein localises to the cell membrane. The enzyme catalyses L-seryl-[protein] + UDP-N-acetyl-alpha-D-glucosamine = 3-O-[N-acetyl-alpha-D-glucosaminyl]-L-seryl-[protein] + UDP + H(+). The protein operates within protein modification; protein glycosylation. In terms of biological role, required for polymorphic O-glycosylation of the serine-rich repeat protein (SRRP) in this bacteria. Catalyzes the first step in glycosylation by transferring N-acetylglucosamine from UDP-GlcNAc to serine residues in the substrate protein. Part of the accessory SecA2/SecY2 system specifically required to export serine-rich repeat cell wall proteins encoded in the same operon. The GtfA-GtfB complex adds GlcNAc from UDP-GlcNAc to SRRP (experimentally characterized with a truncated SSR1 construct); the alpha linkage was shown for this enzyme but not the residues glycosylated on SRRP. The chain is UDP-N-acetylglucosamine--peptide N-acetylglucosaminyltransferase GtfA subunit from Limosilactobacillus reuteri subsp. suis (strain ATCC 53608 / LMG 31752 / 1063) (Lactobacillus reuteri).